A 248-amino-acid chain; its full sequence is 3-deoxy-manno-octulosonate cytidylyltransferase (248 aa).

This sequence belongs to the KdsB family.

The protein localises to the cytoplasm. The enzyme catalyses 3-deoxy-alpha-D-manno-oct-2-ulosonate + CTP = CMP-3-deoxy-beta-D-manno-octulosonate + diphosphate. It participates in nucleotide-sugar biosynthesis; CMP-3-deoxy-D-manno-octulosonate biosynthesis; CMP-3-deoxy-D-manno-octulosonate from 3-deoxy-D-manno-octulosonate and CTP: step 1/1. It functions in the pathway bacterial outer membrane biogenesis; lipopolysaccharide biosynthesis. In terms of biological role, activates KDO (a required 8-carbon sugar) for incorporation into bacterial lipopolysaccharide in Gram-negative bacteria. The polypeptide is 3-deoxy-manno-octulosonate cytidylyltransferase (Salmonella dublin (strain CT_02021853)).